Here is a 1468-residue protein sequence, read N- to C-terminus: DNA-directed RNA polymerase subunit beta (1468 aa).

Belongs to the RNA polymerase beta chain family. In terms of assembly, the RNAP catalytic core consists of 2 alpha, 1 beta, 1 beta' and 1 omega subunit. When a sigma factor is associated with the core the holoenzyme is formed, which can initiate transcription.

The catalysed reaction is RNA(n) + a ribonucleoside 5'-triphosphate = RNA(n+1) + diphosphate. Its function is as follows. DNA-dependent RNA polymerase catalyzes the transcription of DNA into RNA using the four ribonucleoside triphosphates as substrates. The protein is DNA-directed RNA polymerase subunit beta of Aquifex aeolicus (strain VF5).